A 243-amino-acid polypeptide reads, in one-letter code: MKQLWLDIGNTRLKYWITQNETVIEHAAELHLQSPSDLLLGLIQHFNHQNIQKVGVSSVLDQHNNDRIRSILKRLHIPMIMAKVHQEYAALRCGYDHPEQLGIDRWLQVLAVAQPDRNVCVIGCGTALTIDLVKGYQHLGGYILPNLYLQRDALIQNTKGIKIPDSAFDDLEPGHNTIDAVHHGILLGLVSTIQTIMQQSPQQLVLTGGDAPLFAKFLQPYHPQIEPDLLLKGLQHYVRHQLP.

7–14 (DIGNTRLK) contributes to the ATP binding site. Substrate-binding positions include Tyr-95 and 102–105 (GIDR). Catalysis depends on Asp-104, which acts as the Proton acceptor. Position 126 (Thr-126) interacts with ATP. Residue Thr-177 coordinates substrate.

Belongs to the type III pantothenate kinase family. Homodimer. The cofactor is NH4(+). K(+) serves as cofactor.

The protein localises to the cytoplasm. It carries out the reaction (R)-pantothenate + ATP = (R)-4'-phosphopantothenate + ADP + H(+). Its pathway is cofactor biosynthesis; coenzyme A biosynthesis; CoA from (R)-pantothenate: step 1/5. In terms of biological role, catalyzes the phosphorylation of pantothenate (Pan), the first step in CoA biosynthesis. This chain is Type III pantothenate kinase, found in Acinetobacter baylyi (strain ATCC 33305 / BD413 / ADP1).